A 481-amino-acid polypeptide reads, in one-letter code: Glutamate mutase epsilon subunit (481 aa).

L-glutamate is bound at residue arginine 67. Residue glycine 69 coordinates adenosylcob(III)alamin. Arginine 99 lines the L-glutamate pocket. Adenosylcob(III)alamin is bound at residue asparagine 122. L-glutamate is bound by residues 148 to 149, glutamate 170, and tyrosine 176; that span reads RH. Proline 179 contacts adenosylcob(III)alamin. An L-glutamate-binding site is contributed by tyrosine 180. Adenosylcob(III)alamin contacts are provided by phenylalanine 296, lysine 325, glutamate 329, and isoleucine 333.

This sequence belongs to the methylaspartate mutase GlmE subunit family. As to quaternary structure, heterotetramer composed of 2 epsilon subunits (GlmE) and 2 sigma subunits (GlmS). GlmE exists as a homodimer and GlmS as a monomer. Requires adenosylcob(III)alamin as cofactor.

It carries out the reaction (2S,3S)-3-methyl-L-aspartate = L-glutamate. Its pathway is amino-acid degradation; L-glutamate degradation via mesaconate pathway; acetate and pyruvate from L-glutamate: step 1/4. Its function is as follows. Catalyzes the carbon skeleton rearrangement of L-glutamate to L-threo-3-methylaspartate ((2S,3S)-3-methylaspartate). The polypeptide is Glutamate mutase epsilon subunit (Yersinia enterocolitica serotype O:8 / biotype 1B (strain NCTC 13174 / 8081)).